A 292-amino-acid polypeptide reads, in one-letter code: Small ribosomal subunit biogenesis GTPase RsgA (292 aa).

Residues 64 to 221 form the CP-type G domain; that stretch reads RSELFRPAVA…LVDTPGFSSL (158 aa). GTP contacts are provided by residues 113 to 116 and 164 to 172; these read NKMD and GPSGVGKST. Zn(2+) is bound by residues Cys-245, Cys-250, His-252, and Cys-258.

This sequence belongs to the TRAFAC class YlqF/YawG GTPase family. RsgA subfamily. In terms of assembly, monomer. Associates with 30S ribosomal subunit, binds 16S rRNA. Zn(2+) is required as a cofactor.

The protein localises to the cytoplasm. Functionally, one of several proteins that assist in the late maturation steps of the functional core of the 30S ribosomal subunit. Helps release RbfA from mature subunits. May play a role in the assembly of ribosomal proteins into the subunit. Circularly permuted GTPase that catalyzes slow GTP hydrolysis, GTPase activity is stimulated by the 30S ribosomal subunit. This chain is Small ribosomal subunit biogenesis GTPase RsgA, found in Clostridium botulinum (strain Okra / Type B1).